The primary structure comprises 399 residues: Elongation factor Tu (399 aa).

The tr-type G domain occupies 10–209 (NPHVNIGTIG…EVDSYIPTPE (200 aa)). The G1 stretch occupies residues 19-26 (GHVYHGKT). 19–26 (GHVYHGKT) is a binding site for GTP. T26 is a binding site for Mg(2+). Residues 60-64 (GITIA) are G2. Positions 81 to 84 (DCPG) are G3. GTP contacts are provided by residues 81–85 (DCPGH) and 136–139 (NKQD). A G4 region spans residues 136–139 (NKQD). Positions 174-176 (SAL) are G5.

This sequence belongs to the TRAFAC class translation factor GTPase superfamily. Classic translation factor GTPase family. EF-Tu/EF-1A subfamily. Monomer.

The protein resides in the cytoplasm. It catalyses the reaction GTP + H2O = GDP + phosphate + H(+). Its function is as follows. GTP hydrolase that promotes the GTP-dependent binding of aminoacyl-tRNA to the A-site of ribosomes during protein biosynthesis. The sequence is that of Elongation factor Tu from Helicobacter pylori (strain J99 / ATCC 700824) (Campylobacter pylori J99).